A 767-amino-acid polypeptide reads, in one-letter code: Probable beta-D-xylosidase 7 (767 aa).

The first 19 residues, 1 to 19 (MAKQLLLLLLLFIVHGVES), serve as a signal peptide directing secretion. An N-linked (GlcNAc...) asparagine glycan is attached at Asn100. The active site involves Asp292. Asn643 carries N-linked (GlcNAc...) asparagine glycosylation.

The protein belongs to the glycosyl hydrolase 3 family.

The protein resides in the secreted. It is found in the extracellular space. The protein localises to the extracellular matrix. This Arabidopsis thaliana (Mouse-ear cress) protein is Probable beta-D-xylosidase 7 (BXL7).